The chain runs to 511 residues: uncharacterized protein (511 aa).

A CoA carboxyltransferase N-terminal domain is found at Leu-2–Glu-254. The segment at Leu-2–His-506 is carboxyltransferase. The region spanning His-260–His-506 is the CoA carboxyltransferase C-terminal domain.

This sequence belongs to the AccD/PCCB family.

This is an uncharacterized protein from Bacillus subtilis (strain 168).